Consider the following 488-residue polypeptide: Acetyl-coenzyme A carboxylase carboxyl transferase subunit beta, chloroplastic (488 aa).

One can recognise a CoA carboxyltransferase N-terminal domain in the interval 224-488; that stretch reads LWIQCDNCYG…FFPLNKNEIK (265 aa). Residues Cys-228, Cys-231, Cys-244, and Cys-247 each coordinate Zn(2+). The C4-type zinc finger occupies 228-247; the sequence is CDNCYGLMYKKVEMNVCEEC.

It belongs to the AccD/PCCB family. In terms of assembly, acetyl-CoA carboxylase is a heterohexamer composed of biotin carboxyl carrier protein, biotin carboxylase and 2 subunits each of ACCase subunit alpha and ACCase plastid-coded subunit beta (accD). It depends on Zn(2+) as a cofactor.

It is found in the plastid. Its subcellular location is the chloroplast stroma. It catalyses the reaction N(6)-carboxybiotinyl-L-lysyl-[protein] + acetyl-CoA = N(6)-biotinyl-L-lysyl-[protein] + malonyl-CoA. It functions in the pathway lipid metabolism; malonyl-CoA biosynthesis; malonyl-CoA from acetyl-CoA: step 1/1. Functionally, component of the acetyl coenzyme A carboxylase (ACC) complex. Biotin carboxylase (BC) catalyzes the carboxylation of biotin on its carrier protein (BCCP) and then the CO(2) group is transferred by the transcarboxylase to acetyl-CoA to form malonyl-CoA. The protein is Acetyl-coenzyme A carboxylase carboxyl transferase subunit beta, chloroplastic of Arabis hirsuta (Hairy rock-cress).